The chain runs to 494 residues: DBIRD complex subunit ZNF326 (494 aa).

Disordered stretches follow at residues 1-22 (MDREYGSYNQRSVNSYGNQSFS), 147-170 (AFGGRSNDAFGGPSKGRGRGRGQM), and 202-264 (KMAP…NSEK). The segment covering 7–22 (SYNQRSVNSYGNQSFS) has biased composition (polar residues). The Bipartite nuclear localization signal signature appears at 200 to 221 (KRKMAPPFKPVGFFGKKQKLSK). 2 consecutive C2H2 AKAP95-type zinc fingers follow at residues 273 to 295 (CSFCKFRSFDEKGIEEHLTSATH) and 365 to 388 (CSACSVYVPALHSSVQLHLKSADH). Residues 429–494 (PFETQPDEQQ…CDPLTTTDEV (66 aa)) form a disordered region. A compositionally biased stretch (acidic residues) spans 433 to 451 (QPDEQQQEQEEEEEEEEQQ).

The protein belongs to the AKAP95 family. Component of the DBIRD complex.

Its subcellular location is the nucleus. Its function is as follows. Core component of the DBIRD complex, a multiprotein complex that acts at the interface between core mRNP particles and RNA polymerase II (RNAPII) and integrates transcript elongation with the regulation of alternative splicing. This chain is DBIRD complex subunit ZNF326 (znf326), found in Xenopus laevis (African clawed frog).